The sequence spans 283 residues: 4-diphosphocytidyl-2-C-methyl-D-erythritol kinase (283 aa).

K10 is an active-site residue. 99–109 serves as a coordination point for ATP; it reads PMGGGLGGGSS. D141 is a catalytic residue.

Belongs to the GHMP kinase family. IspE subfamily. Homodimer.

It carries out the reaction 4-CDP-2-C-methyl-D-erythritol + ATP = 4-CDP-2-C-methyl-D-erythritol 2-phosphate + ADP + H(+). Its pathway is isoprenoid biosynthesis; isopentenyl diphosphate biosynthesis via DXP pathway; isopentenyl diphosphate from 1-deoxy-D-xylulose 5-phosphate: step 3/6. Its function is as follows. Catalyzes the phosphorylation of the position 2 hydroxy group of 4-diphosphocytidyl-2C-methyl-D-erythritol. The protein is 4-diphosphocytidyl-2-C-methyl-D-erythritol kinase of Escherichia coli O9:H4 (strain HS).